Reading from the N-terminus, the 1985-residue chain is Voltage-dependent L-type calcium channel subunit alpha-1F (1985 aa).

The span at 1–11 (MSESEVGKDTT) shows a compositional bias: basic and acidic residues. Residues 1–56 (MSESEVGKDTTPEPSPANGTGPGPEWGLCPGPPTVGTDTSGASGLGTPRRRTQHNK) are disordered. At 1-92 (MSESEVGKDT…RSCISIVEWK (92 aa)) the chain is on the cytoplasmic side. Residues 79-375 (NPIRRSCISI…LVLGVLSGEF (297 aa)) form an I repeat. A helical membrane pass occupies residues 93-111 (PFDILILLTIFANCVALGV). Topologically, residues 112–129 (YIPFPEDDSNTANHNLEQ) are extracellular. A helical membrane pass occupies residues 130–149 (VEYVFLVIFTVETVLKIVAY). The Cytoplasmic portion of the chain corresponds to 150-161 (GLVLHPSAYIRN). The helical transmembrane segment at 162–180 (GWNLLDFIIVVVGLFSVLL) threads the bilayer. The Extracellular portion of the chain corresponds to 181-201 (EQGPGRPGDAPHTGGKPGGFD). The helical transmembrane segment at 202–220 (VKALRAFRVLRPLRLVSGV) threads the bilayer. Topologically, residues 221–239 (PSLHIVVNSIMKALVPLLH) are cytoplasmic. A helical membrane pass occupies residues 240-259 (IALLVLFVIIIYAIIGLELF). Residues 260-347 (LGRMHKTCYF…WMQDAMGYEL (88 aa)) are Extracellular-facing. Asn295 carries N-linked (GlcNAc...) asparagine glycosylation. Residue Glu330 participates in Ca(2+) binding. A helical transmembrane segment spans residues 348-372 (PWVYFVSLVIFGSFFVLNLVLGVLS). Topologically, residues 373–529 (GEFSKEREKA…ARCRRAVKSN (157 aa)) are cytoplasmic. The segment at 395-412 (QQMEEDLRGYLDWITQAE) is binding to the beta subunit. Residues 455-469 (SHSTRSTHSTSSHAS) show a composition bias toward low complexity. The segment at 455–490 (SHSTRSTHSTSSHASLPASDTGSMTDTPGDEDEEEG) is disordered. One copy of the II repeat lies at 515 to 761 (NRGLRARCRR…VFLAIAVDNL (247 aa)). The chain crosses the membrane as a helical span at residues 530-549 (ACYWAVLLLVFLNTLTIASE). Residues 550 to 564 (HHGQPLWLTQTQEYA) lie on the Extracellular side of the membrane. A helical transmembrane segment spans residues 565–583 (NKVLLCLFTVEMLLKLYGL). Over 584–591 (GPSVYVAS) the chain is Cytoplasmic. Residues 592–610 (FFNRFDCFVVCGGILETTL) form a helical membrane-spanning segment. The Extracellular portion of the chain corresponds to 611–620 (VEVGAMQPLG). A helical membrane pass occupies residues 621–639 (ISVLRCVRLLRIFKVTRHW). The Cytoplasmic portion of the chain corresponds to 640-658 (ASLSNLVASLLNSMKSIAS). The chain crosses the membrane as a helical span at residues 659-679 (LLLLLFLFIIIFSLLGMQLFG). Residues 680–733 (GKFNFDQTHTKRSTFDTFPQALLTVFQILTGEDWNVVMYDGIMAYGGPFFPGML) lie on the Extracellular side of the membrane. Glu711 lines the Ca(2+) pocket. A helical transmembrane segment spans residues 734–758 (VCVYFIILFICGNYILLNVFLAIAV). Topologically, residues 759–876 (DNLASGDAGT…KACHTLIHHH (118 aa)) are cytoplasmic. The disordered stretch occupies residues 766–834 (AGTAKDKGRE…EEEEENGAGH (69 aa)). The segment covering 768 to 787 (TAKDKGREKSSEGNPPKENK) has biased composition (basic and acidic residues). Acidic residues predominate over residues 810–830 (MEEEEEEEEEEEEEEEEEEEN). The III repeat unit spans residues 858–1140 (CLSQTNPLRK…FFMMNIFVGF (283 aa)). The chain crosses the membrane as a helical span at residues 877-895 (IFTSLILVFIILSSVSLAA). At 896–911 (EDPIRAHSFRNHILGY) the chain is on the extracellular side. The chain crosses the membrane as a helical span at residues 912 to 931 (FDYAFTSIFTVEILLKMTVF). Over 932–943 (GAFLHRGSFCRS) the chain is Cytoplasmic. The chain crosses the membrane as a helical span at residues 944 to 962 (WFNLLDLLVVSVSLISFGI). The Extracellular segment spans residues 963–968 (HSSAIS). A helical transmembrane segment spans residues 969 to 988 (VVKILRVLRVLRPLRAINRA). At 989-1007 (KGLKHVVQCVFVAIRTIGN) the chain is on the cytoplasmic side. A helical membrane pass occupies residues 1008–1027 (IMIVTTLLQFMFACIGVQLF). At 1028-1117 (KGKFYSCTDE…EGPIYNYHVE (90 aa)) the chain is on the extracellular side. Residues 1065–1155 (RLWVNSDFNF…RAQGEQEYQN (91 aa)) are dihydropyridine binding. Glu1091 serves as a coordination point for Ca(2+). The chain crosses the membrane as a helical span at residues 1118–1138 (ISVFFIVYIIIIAFFMMNIFV). The Cytoplasmic portion of the chain corresponds to 1139-1195 (GFVIITFRAQGEQEYQNCELDKNQRQCVEYALKAQPLRRYIPKNPHQYRVWATVNSR). Residues 1182–1449 (NPHQYRVWAT…LFVAVIMDNF (268 aa)) form an IV repeat. The chain crosses the membrane as a helical span at residues 1196 to 1214 (AFEYLMFLLILLNTVALAM). At 1215-1229 (QHYEQTAPFNYAMDI) the chain is on the extracellular side. A helical transmembrane segment spans residues 1230–1249 (LNMVFTGLFTIEMVLKIIAF). Residues 1250–1256 (KPKHYFA) are Cytoplasmic-facing. Residues 1257-1278 (DAWNTFDALIVVGSVVDIAVTE) form a helical membrane-spanning segment. The Extracellular segment spans residues 1279-1295 (VNNGGHLGESSEDTSRI). A helical transmembrane segment spans residues 1296 to 1315 (SITFFRLFRVMRLVKLLSKG). Residues 1316-1334 (EGIRTLLWTFIKSFQALPY) lie on the Cytoplasmic side of the membrane. The chain crosses the membrane as a helical span at residues 1335-1354 (VALLIAMIFFIYAVIGMQMF). The Extracellular segment spans residues 1355–1421 (GLVALQDGTQ…GEEFTCGSSF (67 aa)). The tract at residues 1402–1468 (RCDPESDFGP…LGPHHLDEFK (67 aa)) is dihydropyridine binding. Positions 1414-1457 (EFTCGSSFAIVYFISFFMLCAFLIINLFVAVIMDNFDYLTRDWS) are phenylalkylamine binding. The chain crosses the membrane as a helical span at residues 1422-1446 (AIVYFISFFMLCAFLIINLFVAVIM). Topologically, residues 1447 to 1982 (DNFDYLTRDW…EDLGDEMACV (536 aa)) are cytoplasmic. 2 disordered regions span residues 1643–1729 (VTEE…PHRR) and 1746–1778 (LKGTQGQDNQNEEQELPDWTPDLDRAGRDSFEP). Over residues 1644–1665 (TEEEEEEEEAVGQEAEEEEAEN) the composition is skewed to acidic residues. Polar residues-rich tracts occupy residues 1675 to 1687 (DSQPQSRWNSRIS) and 1713 to 1724 (NSRQPSVIQAGS). A compositionally biased stretch (basic and acidic residues) spans 1767 to 1776 (DLDRAGRDSF).

Belongs to the calcium channel alpha-1 subunit (TC 1.A.1.11) family. CACNA1F subfamily. Voltage-dependent calcium channels are multisubunit complexes, consisting of alpha-1, alpha-2, beta and delta subunits in a 1:1:1:1 ratio. The channel activity is directed by the pore-forming and voltage-sensitive alpha-1 subunit. In many cases, this subunit is sufficient to generate voltage-sensitive calcium channel activity. The auxiliary subunits beta and alpha-2/delta linked by a disulfide bridge regulate the channel activity. Interacts (via IQ domain) with CABP4; in a calcium independent manner. Expressed in the inner and outer nuclear layers and the genglion cell layer of the retina.

It localises to the membrane. The enzyme catalyses Ca(2+)(in) = Ca(2+)(out). Voltage-sensitive calcium channels (VSCC) mediate the entry of calcium ions into excitable cells and are also involved in a variety of calcium-dependent processes, including muscle contraction, hormone or neurotransmitter release, gene expression, cell motility, cell division and cell death. The isoform alpha-1F gives rise to L-type calcium currents. Long-lasting (L-type) calcium channels belong to the 'high-voltage activated' (HVA) group. They are blocked by dihydropyridines (DHP), phenylalkylamines, and by benzothiazepines. Activates at more negative voltages and does not undergo calcium-dependent inactivation (CDI), due to incoming calcium ions, during depolarization. This is Voltage-dependent L-type calcium channel subunit alpha-1F from Mus musculus (Mouse).